The following is a 356-amino-acid chain: MTQMEYIPIISDSTSSFKSYDPFPLELGGELPELKIAYRTWGTLNAQKSNVILVCHALTGNADADSWWRGMFGEGKAFDETKDFIICSNVIGSCYGSTGPLSLNPKSGKRYGPDFPRITIRDMVAAQRLLLQSFGIEKIKLVIGASLGGMQVLEWGAMYPEMAGALMPMGISGRHSAWCIAQSEAQRQAIAADAEWQGGWYDPAQQPRKGLAAARMMAMCTYRCFENYEERFGREQREDGLFEAESYMRHQGDKLVGRFDANTYITLTRAMDMHDLGRGRESYEAALGAFTMPVEILSIDSDILYPKQEQEELARLIPGSRLLFLDEPYGHDAFLIDTDTVSRMACEFKRQLIVDN.

The region spanning 50 to 335 (NVILVCHALT…DEPYGHDAFL (286 aa)) is the AB hydrolase-1 domain. The active-site Nucleophile is the Ser-146. Substrate is bound at residue Arg-215. Catalysis depends on residues Asp-302 and His-331. Position 332 (Asp-332) interacts with substrate.

It belongs to the AB hydrolase superfamily. MetX family. As to quaternary structure, homodimer.

The protein localises to the cytoplasm. The catalysed reaction is L-homoserine + acetyl-CoA = O-acetyl-L-homoserine + CoA. It participates in amino-acid biosynthesis; L-methionine biosynthesis via de novo pathway; O-acetyl-L-homoserine from L-homoserine: step 1/1. In terms of biological role, transfers an acetyl group from acetyl-CoA to L-homoserine, forming acetyl-L-homoserine. The chain is Homoserine O-acetyltransferase from Chlorobaculum parvum (strain DSM 263 / NCIMB 8327) (Chlorobium vibrioforme subsp. thiosulfatophilum).